A 394-amino-acid chain; its full sequence is Sugar efflux transporter C (394 aa).

Topologically, residues 1-10 are periplasmic; that stretch reads MQKTATTPSK. The chain crosses the membrane as a helical span at residues 11–31; the sequence is ILDLTAAAFLLVAFLTGIAGA. Residues 32–49 lie on the Cytoplasmic side of the membrane; sequence LQTPTLSIFLADELKARP. The chain crosses the membrane as a helical span at residues 50–70; the sequence is IMVGFFFTGSAIMGILVSQFL. Residues 71–80 are Periplasmic-facing; that stretch reads ARHSDKQGDR. The helical transmembrane segment at 81–101 threads the bilayer; sequence KLLILLCCLFGVLACTLFAWN. Topologically, residues 102-104 are cytoplasmic; it reads RNY. A helical transmembrane segment spans residues 105-125; sequence FILLSTGVLLSSFASTANPQM. The Periplasmic segment spans residues 126–150; it reads FALAREHADRTGRETVMFSTFLRAQ. Residues 151-171 form a helical membrane-spanning segment; it reads ISLAWVIGPPLAYELAMGFSF. Position 172 (Lys172) is a topological domain, cytoplasmic. A helical membrane pass occupies residues 173–193; that stretch reads VMYLTAAIAFVVCGLIVWLFL. The Periplasmic segment spans residues 194–224; it reads PSIQRNIPVVTQPVEILPSTHRKRDTRLLFV. The chain crosses the membrane as a helical span at residues 225-245; sequence VCSMMWAANNLYMINMPLFII. Residues 246–253 lie on the Cytoplasmic side of the membrane; that stretch reads DELHLTDK. The helical transmembrane segment at 254–274 threads the bilayer; the sequence is LTGEMIGIAAGLEIPMMLIAG. The Periplasmic portion of the chain corresponds to 275-283; sequence YYMKRIGKR. The helical transmembrane segment at 284–304 threads the bilayer; sequence LLMLIAIVSGMCFYASVLMAT. The Cytoplasmic segment spans residues 305–310; that stretch reads TPAVEL. Residues 311–331 form a helical membrane-spanning segment; that stretch reads ELQILNAIFLGILCGIGMLYF. Residues 332 to 370 are Periplasmic-facing; the sequence is QDLMPEKIGSATTLYANTSRVGWIIAGSVDGIMVEIWSY. Residues 371 to 391 form a helical membrane-spanning segment; that stretch reads HALFWLAIGMLGIAMICLLFI. Over 392–394 the chain is Cytoplasmic; it reads KDI.

The protein belongs to the major facilitator superfamily. Set transporter family.

The protein localises to the cell inner membrane. Involved in the efflux of sugars. The physiological role may be the detoxification of non-metabolizable sugar analogs. The polypeptide is Sugar efflux transporter C (setC) (Escherichia coli (strain K12)).